The sequence spans 87 residues: Phosphocarrier protein HPr (87 aa).

Residues 1–87 form the HPr domain; that stretch reads MEKIFKVTSD…ETMKNEGLGE (87 aa). Histidine 14 (pros-phosphohistidine intermediate; alternate) is an active-site residue. Histidine 14 carries the tele-phosphohistidine; alternate modification. The residue at position 45 (serine 45) is a Phosphoserine; by HPrK/P.

Belongs to the HPr family. Post-translationally, the form phosphorylated at the tele nitrogen (N(epsilon)2), instead of the expected pros nitrogen (N(delta)1), of His-14 is not able to transfer its phosphoryl group to the B.subtilis EIIA-Glc domain. This form may be inactive in PTS-catalyzed sugar transport or target an as yet unknown acceptor molecule in an alternative metabolic process.

It is found in the cytoplasm. With respect to regulation, phosphorylation on Ser-45 inhibits the phosphoryl transfer from enzyme I to HPr. Functionally, general (non sugar-specific) component of the phosphoenolpyruvate-dependent sugar phosphotransferase system (sugar PTS). This major carbohydrate active-transport system catalyzes the phosphorylation of incoming sugar substrates concomitantly with their translocation across the cell membrane. The phosphoryl group from phosphoenolpyruvate (PEP) is transferred to the phosphoryl carrier protein HPr by enzyme I. Phospho-HPr then transfers it to the PTS EIIA domain. Its function is as follows. P-Ser-HPr interacts with the catabolite control protein A (CcpA), forming a complex that binds to DNA at the catabolite response elements cre, operator sites preceding a large number of catabolite-regulated genes. Thus, P-Ser-HPr is a corepressor in carbon catabolite repression (CCR), a mechanism that allows bacteria to coordinate and optimize the utilization of available carbon sources. P-Ser-HPr mediates glucose catabolite repression of cry4A toxin expression. The chain is Phosphocarrier protein HPr (ptsH) from Bacillus thuringiensis subsp. israelensis.